A 466-amino-acid chain; its full sequence is Asparagine--tRNA ligase (466 aa).

It belongs to the class-II aminoacyl-tRNA synthetase family. Homodimer.

It localises to the cytoplasm. It catalyses the reaction tRNA(Asn) + L-asparagine + ATP = L-asparaginyl-tRNA(Asn) + AMP + diphosphate + H(+). The chain is Asparagine--tRNA ligase from Syntrophobacter fumaroxidans (strain DSM 10017 / MPOB).